We begin with the raw amino-acid sequence, 430 residues long: Gamma-glutamyl phosphate reductase (430 aa).

Belongs to the gamma-glutamyl phosphate reductase family.

It localises to the cytoplasm. It carries out the reaction L-glutamate 5-semialdehyde + phosphate + NADP(+) = L-glutamyl 5-phosphate + NADPH + H(+). The protein operates within amino-acid biosynthesis; L-proline biosynthesis; L-glutamate 5-semialdehyde from L-glutamate: step 2/2. Functionally, catalyzes the NADPH-dependent reduction of L-glutamate 5-phosphate into L-glutamate 5-semialdehyde and phosphate. The product spontaneously undergoes cyclization to form 1-pyrroline-5-carboxylate. In Polaromonas naphthalenivorans (strain CJ2), this protein is Gamma-glutamyl phosphate reductase.